A 522-amino-acid chain; its full sequence is Neutral amino acid uniporter 4 (522 aa).

Helical transmembrane passes span 115–135, 181–201, 226–246, 255–275, 293–313, 329–349, 377–397, 409–429, 435–455, and 467–487; these read AGVL…IHCM, LVDW…FVFL, SLDL…LVFI, LSFF…QYVI, YPLF…VLPL, IGMA…YFCF, FGIY…ILPA, LCEF…AVLI, VISF…PPLV, and PWVI…FIAG. The N-linked (GlcNAc...) asparagine glycan is linked to Asn515.

This sequence belongs to the amino acid/polyamine transporter 2 family.

Its subcellular location is the lysosome membrane. The enzyme catalyses L-tryptophan(in) = L-tryptophan(out). The catalysed reaction is L-alanine(in) = L-alanine(out). It catalyses the reaction L-proline(in) = L-proline(out). Uniporter that mediates the transport of neutral amino acids like L-tryptophan, proline and alanine. The transport activity is sodium ions-independent, electroneutral and therefore functions via facilitated diffusion. The polypeptide is Neutral amino acid uniporter 4 (Xenopus laevis (African clawed frog)).